The chain runs to 431 residues: Peptidase B (431 aa).

Positions 196 and 201 each coordinate Mn(2+). Lysine 208 is a catalytic residue. Aspartate 219, aspartate 278, and glutamate 280 together coordinate Mn(2+). Arginine 282 is an active-site residue.

It belongs to the peptidase M17 family. In terms of assembly, homohexamer. Mn(2+) serves as cofactor.

It localises to the cytoplasm. The enzyme catalyses Release of an N-terminal amino acid, Xaa, from a peptide or arylamide. Xaa is preferably Glu or Asp but may be other amino acids, including Leu, Met, His, Cys and Gln.. Its function is as follows. Probably plays an important role in intracellular peptide degradation. The chain is Peptidase B from Serratia proteamaculans (strain 568).